We begin with the raw amino-acid sequence, 208 residues long: MAKYNDAKCRLCRREGTKLFLKGDRCFTDKCAYDRRPYAPGQHGRVRKKMSDYAIQLREKQKVRRVYGVLEKQFREYFVHADMAKGITGVNLLSYLERRLDNVVYRLGLANSRVQARQLIRHGIFTLNGHKVTIPSLQVNVGDSIEVPEKNRKISVVADAQSIVGRRGCPSWLELDASTFKGVVKALPQREDIQFPINEHLIVELYSK.

Positions 98–158 constitute an S4 RNA-binding domain; it reads RRLDNVVYRL…EKNRKISVVA (61 aa).

It belongs to the universal ribosomal protein uS4 family. Part of the 30S ribosomal subunit. Contacts protein S5. The interaction surface between S4 and S5 is involved in control of translational fidelity.

Functionally, one of the primary rRNA binding proteins, it binds directly to 16S rRNA where it nucleates assembly of the body of the 30S subunit. In terms of biological role, with S5 and S12 plays an important role in translational accuracy. This chain is Small ribosomal subunit protein uS4, found in Lawsonia intracellularis (strain PHE/MN1-00).